Reading from the N-terminus, the 889-residue chain is DNA mismatch repair protein MutS (889 aa).

Over residues Met1–Ser17 the composition is skewed to low complexity. Residues Met1–Gln20 form a disordered region. Gly640 to Ser647 is a binding site for ATP.

The protein belongs to the DNA mismatch repair MutS family.

Its function is as follows. This protein is involved in the repair of mismatches in DNA. It is possible that it carries out the mismatch recognition step. This protein has a weak ATPase activity. The sequence is that of DNA mismatch repair protein MutS from Pseudoalteromonas atlantica (strain T6c / ATCC BAA-1087).